A 343-amino-acid polypeptide reads, in one-letter code: uncharacterized protein (343 aa).

This is an uncharacterized protein from Tortricidae (ClGV).